We begin with the raw amino-acid sequence, 524 residues long: B3 domain-containing protein Os07g0183700 (524 aa).

Disordered stretches follow at residues 94–152 and 191–232; these read DGEG…TSVS and PLQP…FQTQ. The segment covering 100-109 has biased composition (pro residues); that stretch reads CAPPPSPIPA. Composition is skewed to low complexity over residues 110-124 and 200-232; these read GPASSTVSAASSAPA and AAAAAGSPSATTPEPGHGEATPTTSSSAQFQTQ. Residues 336–434 constitute a DNA-binding region (TF-B3); the sequence is SFVKPLTYTD…EMFMAVRRTR (99 aa).

Its subcellular location is the nucleus. The protein is B3 domain-containing protein Os07g0183700 of Oryza sativa subsp. japonica (Rice).